The following is a 319-amino-acid chain: Aliphatic sulfonates import ATP-binding protein SsuB (319 aa).

The ABC transporter domain occupies 63 to 282 (VTLSGVSKRF…ARASAAFAAL (220 aa)). 95–102 (GRSGCGKS) provides a ligand contact to ATP.

The protein belongs to the ABC transporter superfamily. Aliphatic sulfonates importer (TC 3.A.1.17.2) family. In terms of assembly, the complex is composed of two ATP-binding proteins (SsuB), two transmembrane proteins (SsuC) and a solute-binding protein (SsuA).

The protein localises to the cell inner membrane. It catalyses the reaction ATP + H2O + aliphatic sulfonate-[sulfonate-binding protein]Side 1 = ADP + phosphate + aliphatic sulfonateSide 2 + [sulfonate-binding protein]Side 1.. Functionally, part of the ABC transporter complex SsuABC involved in aliphatic sulfonates import. Responsible for energy coupling to the transport system. The protein is Aliphatic sulfonates import ATP-binding protein SsuB of Burkholderia ambifaria (strain ATCC BAA-244 / DSM 16087 / CCUG 44356 / LMG 19182 / AMMD) (Burkholderia cepacia (strain AMMD)).